Consider the following 739-residue polypeptide: Phosphoribosylformylglycinamidine synthase subunit PurL (739 aa).

His-54 is a catalytic residue. Residues Tyr-57 and Lys-96 each coordinate ATP. Residue Glu-98 coordinates Mg(2+). Residues 99-102 (SHNH) and Arg-121 contribute to the substrate site. The active-site Proton acceptor is the His-100. A Mg(2+)-binding site is contributed by Asp-122. Gln-245 lines the substrate pocket. Asp-273 is a binding site for Mg(2+). 317-319 (ESQ) is a substrate binding site. Asp-500 and Gly-537 together coordinate ATP. Position 538 (Asn-538) interacts with Mg(2+). Ser-540 lines the substrate pocket.

This sequence belongs to the FGAMS family. In terms of assembly, monomer. Part of the FGAM synthase complex composed of 1 PurL, 1 PurQ and 2 PurS subunits.

The protein localises to the cytoplasm. It carries out the reaction N(2)-formyl-N(1)-(5-phospho-beta-D-ribosyl)glycinamide + L-glutamine + ATP + H2O = 2-formamido-N(1)-(5-O-phospho-beta-D-ribosyl)acetamidine + L-glutamate + ADP + phosphate + H(+). Its pathway is purine metabolism; IMP biosynthesis via de novo pathway; 5-amino-1-(5-phospho-D-ribosyl)imidazole from N(2)-formyl-N(1)-(5-phospho-D-ribosyl)glycinamide: step 1/2. In terms of biological role, part of the phosphoribosylformylglycinamidine synthase complex involved in the purines biosynthetic pathway. Catalyzes the ATP-dependent conversion of formylglycinamide ribonucleotide (FGAR) and glutamine to yield formylglycinamidine ribonucleotide (FGAM) and glutamate. The FGAM synthase complex is composed of three subunits. PurQ produces an ammonia molecule by converting glutamine to glutamate. PurL transfers the ammonia molecule to FGAR to form FGAM in an ATP-dependent manner. PurS interacts with PurQ and PurL and is thought to assist in the transfer of the ammonia molecule from PurQ to PurL. This is Phosphoribosylformylglycinamidine synthase subunit PurL from Bacillus cereus (strain Q1).